We begin with the raw amino-acid sequence, 1376 residues long: MLFVFILFLPSCLGYIGDFRCIQTVNYNGNNASAPSISTEAVDVSKGLGTYYVLDRVYLNATLLLTGYYPVDGSNYRNLALTGTNTLSLTWFKPPFLSEFNDGIFAKVQNLKTNTPTGATSYFPTIVIGSLFGNTSYTVVLEPYNNIIMASVCTYTICQLPYTPCKPNTNGNRVIGFWHTDVKPPICLLKRNFTFNVNAPWLYFHFYQQGGTFYAYYADKPSATTFLFSVYIGDILTQYFVLPFICTPTAGSTLLPLYWVTPLLKRQYLFNFNEKGVITSAVDCASSYISEIKCKTQSLLPSTGVYDLSGYTVQPVGVVYRRVPNLPDCKIEEWLTAKSVPSPLNWERRTFQNCNFNLSSLLRYVQAESLSCNNIDASKVYGMCFGSVSVDKFAIPRSRQIDLQIGNSGFLQTANYKIDTAATSCQLYYSLPKNNVTINNYNPSSWNRRYGFNDAGVFGKSKHDVAYAQQCFIVRPSYCPCAQPDIVSACTSQTKPMSAYCPTGTIHRECSLWNGPHLRSARVGSGTYTCECTCKPNPFDTYDLRCGQIKTIVNVGDHCEGLGVLEDKCGNSDPHKGCSCAHDSFIGWSHDTCLVNDHSQIFANILLNGINSGTTCSTDLQLPNTEVATGVCVRYDLYGITGQGVFKEVKADYYNSWQALLYDVNGNLNGFRDLTTNKTYTIRSCYSGRVSAAYHKEAPEPALLYRNINCSYVFTNNISREENPLNYFDSYLGCVVNADNRPDEALPNCDLRMGAGLCVDYSKSRRARRSVSTGYRLTTFEPYMPMLVNDSVQSVGGLYEMQIPTNFTIGHHEEFIQIRAPKVTIDCAAFVCGDNAACRQQLVEYGSFCDNVNAILNEVNNLLDNMQLQVASALMQGVTISSRLPDGISGPIDDINFSPLLGCIGSTCAEDGNGPSAMRGRSAIEDLLFDKVKLSDVGFVEAYNNCTGGQEVRDLLCVQSFNGIKVLPPVLSESQISGYTAGATAAAMFPPWTAAAGVPFSLNVQYRINGLGVTMNVLSENQKMIASAFNNALGAIQEGFDATNSALGKIQSVVNANAEALNNLLNQLSNRFGAISASLQEILTRLDRVEAKAQIDRLINGRLTALNAYISKQLSDSTLIKFSAAQAIEKVNECVKSQTTRINFCGNGNHILSLVQNAPYGLCFIHFSYVPTSFKTANVSPGLCISGDRGLAPKAGYFVQDNGEWKFTGSNYYYPEPITDKNSVVMISCAVNYTKAPEVFLNNSIPNLPDFKEELDKWFKNQTSIAPDLSLDFEKLNVTFLDLTYEMNRIQDAIKKLNESYINLKEVGTYEMYVKWPWYVWLLIGLAGVAVCVLLFFICCCTGCGSCCFRKCGSCCDEYGGHQDSIVIYNISAHED.

The signal sequence occupies residues M1 to L13. Residues G14–P1317 are Extracellular-facing. Positions Y15–T296 constitute a BetaCoV S1-NTD domain. A receptor binding site region spans residues Y15–K330. Intrachain disulfides connect C21–C158, C153–C187, C165–C246, C284–C294, and C329–C354. N-linked (GlcNAc...) asparagine; by host glycans are attached at residues N31, N60, and N134. N192 carries an N-linked (GlcNAc...) asparagine; by host glycan. The region spanning P327 to T618 is the BetaCoV S1-CTD domain. An N-linked (GlcNAc...) asparagine; by host glycan is attached at N357. 2 cysteine pairs are disulfide-bonded: C372–C425 and C384–C616. 6 N-linked (GlcNAc...) asparagine; by host glycosylation sites follow: N435, N677, N709, N717, N789, and N806. Fusion peptide regions lie at residues S922–Y943 and E941–F961. An N-linked (GlcNAc...) asparagine; by host glycan is attached at N945. The cysteines at positions 946 and 957 are disulfide-linked. Residues Q1022–F1072 are heptad repeat 1. The stretch at Q1051 to I1095 forms a coiled coil. 5 N-linked (GlcNAc...) asparagine; by host glycosylation sites follow: N1232, N1242, N1261, N1277, and N1298. Residues A1266–E1306 are heptad repeat 2. Positions T1279–V1307 form a coiled coil. The helical transmembrane segment at W1318 to I1338 threads the bilayer. At C1339–D1376 the chain is on the cytoplasmic side. The KxHxx signature appears at S1372 to D1376.

Belongs to the betacoronaviruses spike protein family. Homotrimer; each monomer consists of a S1 and a S2 subunit. The resulting peplomers protrude from the virus surface as spikes. Specific enzymatic cleavages in vivo yield mature proteins. The precursor is processed into S1 and S2 by host cell furin or another cellular protease to yield the mature S1 and S2 proteins. Additionally, a second cleavage leads to the release of a fusion peptide after viral attachment to host cell receptor. In terms of processing, the cytoplasmic Cys-rich domain is palmitoylated. Spike glycoprotein is digested within host endosomes.

It localises to the virion membrane. Its subcellular location is the host endoplasmic reticulum-Golgi intermediate compartment membrane. The protein localises to the host cell membrane. Functionally, attaches the virion to the cell membrane by interacting with host receptor, initiating the infection. Mediates fusion of the virion and cellular membranes by acting as a class I viral fusion protein. Under the current model, the protein has at least three conformational states: pre-fusion native state, pre-hairpin intermediate state, and post-fusion hairpin state. During viral and target cell membrane fusion, the coiled coil regions (heptad repeats) assume a trimer-of-hairpins structure, positioning the fusion peptide in close proximity to the C-terminal region of the ectodomain. The formation of this structure appears to drive apposition and subsequent fusion of viral and target cell membranes. Its function is as follows. Acts as a viral fusion peptide which is unmasked following S2 cleavage occurring upon virus endocytosis. This is Spike glycoprotein from Mus musculus (Mouse).